Consider the following 461-residue polypeptide: V-type ATP synthase beta chain (461 aa).

This sequence belongs to the ATPase alpha/beta chains family.

Its function is as follows. Produces ATP from ADP in the presence of a proton gradient across the membrane. The V-type beta chain is a regulatory subunit. The chain is V-type ATP synthase beta chain from Clostridium botulinum (strain 657 / Type Ba4).